An 827-amino-acid chain; its full sequence is MAAQTTRPVEEITAEEARAAHEALSAEIAEHDRRYHGEDAPIISDAAYDSLRRRLEAIEERFPDLAGTGAASASVGAKASDKFAKVRHAVPMLSLGNAFADEEIEEFVERVRRFLGLPASESLAVTAEPKIDGLSLSLRYEGGRLVTAATRGDGEVGEDVTANVRTIREVPERLAGPDVPEICEVRGEVYLSHADFAAINARQEEAGKPLFANPRNAAAGSLRQLDPSITASRPLRFFAYAAGEMSTWPAETQSGLIAAFRRFGLPVNPRTTRCTSVAEMLAHYRAIETERADLGYDIDGVVYKVDSFALQRRLGFVARAPRWALAHKFPAQRAVTTIEAIEINVGRTGSLNPLARLRPVTVGGVVVSNATLHNEDYVRGIDADGTPIRSGINIWDGFALRTDVDLSRGSDVRVGDTVVVLRAGDVIPKVADVVLERRPADAVPYRFPEICPACGSHAVRSYNPRTGKLDSVRRCTGGLICPAQGQERLKHFVSRNALDIEGFGETSITTLFEAGLVRQPADLFRLDFAPLKAAIVARRQALSAERALASGKAPEARKTKAKASEEDKAIRNLLAAVEARRVVPLNRFIFALGIEQVGEATAKALAKHFPDMPALMEGVRAAAAHQPGPDWVGLAALNRVGPTTRERLLAAAEAGETDLLAEGTVARLSAAQKEALLEAYGSPEGVRAAVMRACRQRPGDAYRHLADDSEIGAVTTASLIQFFSEAHNVAAVEALLAQVRTERAAPPAAAAAFSGRTVVFTGSLERMTRSEAKATAERLGAKVSGSVSAKTDLVVAGPGAGTKLKDAEKHGVRVISEAEWLAMVEAA.

NAD(+) contacts are provided by residues 45–49 (DAAYD), 94–95 (SL), and E128. The active-site N6-AMP-lysine intermediate is the K130. NAD(+) is bound by residues R151, E188, K304, and K328. The Zn(2+) site is built by C451, C454, C475, and C481. The 80-residue stretch at 748 to 827 (AAAAAFSGRT…AEWLAMVEAA (80 aa)) folds into the BRCT domain.

It belongs to the NAD-dependent DNA ligase family. LigA subfamily. It depends on Mg(2+) as a cofactor. Mn(2+) serves as cofactor.

The enzyme catalyses NAD(+) + (deoxyribonucleotide)n-3'-hydroxyl + 5'-phospho-(deoxyribonucleotide)m = (deoxyribonucleotide)n+m + AMP + beta-nicotinamide D-nucleotide.. Functionally, DNA ligase that catalyzes the formation of phosphodiester linkages between 5'-phosphoryl and 3'-hydroxyl groups in double-stranded DNA using NAD as a coenzyme and as the energy source for the reaction. It is essential for DNA replication and repair of damaged DNA. In Methylobacterium sp. (strain 4-46), this protein is DNA ligase.